We begin with the raw amino-acid sequence, 37 residues long: Photosystem I reaction center subunit VIII (37 aa).

A helical membrane pass occupies residues 10 to 30; it reads IFVPLVGLVFPAIAMASLSLY.

It belongs to the PsaI family.

It is found in the plastid. Its subcellular location is the chloroplast thylakoid membrane. May help in the organization of the PsaL subunit. The protein is Photosystem I reaction center subunit VIII of Gossypium hirsutum (Upland cotton).